A 1149-amino-acid chain; its full sequence is Structural maintenance of chromosomes protein 6 homolog smc-6 (1149 aa).

An ATP-binding site is contributed by G77–S84. Residues L309–D460 are a coiled coil. The tract at residues I461–L687 is flexible hinge. Residues Y714 to D920 are a coiled coil. 2 disordered regions span residues N875–E900 and E1026–L1060. Acidic residues predominate over residues E1026–D1038. The span at P1042 to R1058 shows a compositional bias: basic residues.

Belongs to the SMC family. SMC6 subfamily. As to quaternary structure, interacts with smc-5. In terms of tissue distribution, expressed in the germline (at protein level).

The protein resides in the nucleus. It localises to the chromosome. Its function is as follows. Core component of the smc-5/smc-6 complex. Involved in DNA double-strand break repair by promoting sister-chromatid homologous recombination during meiosis. Also plays a role in the DNA damage repair of ultraviolet (UV) radiation-induced DNA lesions. Promotes efficient DNA replication. The protein is Structural maintenance of chromosomes protein 6 homolog smc-6 of Caenorhabditis elegans.